The chain runs to 389 residues: S-adenosylmethionine synthase (389 aa).

H15 lines the ATP pocket. Position 17 (D17) interacts with Mg(2+). E43 serves as a coordination point for K(+). 2 residues coordinate L-methionine: E56 and Q99. The segment at 99–109 is flexible loop; sequence QSPDIAQGVNE. Residues 166–168, 234–235, D243, 249–250, A266, and K270 contribute to the ATP site; these read DAK, RF, and RK. An L-methionine-binding site is contributed by D243. K274 contributes to the L-methionine binding site.

The protein belongs to the AdoMet synthase family. Homotetramer; dimer of dimers. It depends on Mg(2+) as a cofactor. Requires K(+) as cofactor.

It is found in the cytoplasm. The catalysed reaction is L-methionine + ATP + H2O = S-adenosyl-L-methionine + phosphate + diphosphate. It participates in amino-acid biosynthesis; S-adenosyl-L-methionine biosynthesis; S-adenosyl-L-methionine from L-methionine: step 1/1. In terms of biological role, catalyzes the formation of S-adenosylmethionine (AdoMet) from methionine and ATP. The overall synthetic reaction is composed of two sequential steps, AdoMet formation and the subsequent tripolyphosphate hydrolysis which occurs prior to release of AdoMet from the enzyme. In Neisseria meningitidis serogroup C / serotype 2a (strain ATCC 700532 / DSM 15464 / FAM18), this protein is S-adenosylmethionine synthase.